A 199-amino-acid polypeptide reads, in one-letter code: GTP cyclohydrolase-2 (199 aa).

52–56 (RMHSE) lines the GTP pocket. The Zn(2+) site is built by cysteine 57, cysteine 68, and cysteine 70. GTP is bound by residues glutamine 73, 94 to 96 (EGR), and threonine 116. Aspartate 128 (proton acceptor) is an active-site residue. Catalysis depends on arginine 130, which acts as the Nucleophile. Residues threonine 151 and lysine 156 each coordinate GTP.

It belongs to the GTP cyclohydrolase II family. The cofactor is Zn(2+).

It carries out the reaction GTP + 4 H2O = 2,5-diamino-6-hydroxy-4-(5-phosphoribosylamino)-pyrimidine + formate + 2 phosphate + 3 H(+). Its pathway is cofactor biosynthesis; riboflavin biosynthesis; 5-amino-6-(D-ribitylamino)uracil from GTP: step 1/4. Functionally, catalyzes the conversion of GTP to 2,5-diamino-6-ribosylamino-4(3H)-pyrimidinone 5'-phosphate (DARP), formate and pyrophosphate. The sequence is that of GTP cyclohydrolase-2 from Aliivibrio salmonicida (strain LFI1238) (Vibrio salmonicida (strain LFI1238)).